Here is a 204-residue protein sequence, read N- to C-terminus: Urease accessory protein UreE (204 aa).

Over residues 172–190 the composition is skewed to basic and acidic residues; sequence HGHAHSHDHDHDHDHDHQH. Positions 172 to 204 are disordered; it reads HGHAHSHDHDHDHDHDHQHGPGCTHGHHGHDHH.

It belongs to the UreE family.

It is found in the cytoplasm. Its function is as follows. Involved in urease metallocenter assembly. Binds nickel. Probably functions as a nickel donor during metallocenter assembly. The polypeptide is Urease accessory protein UreE (Burkholderia orbicola (strain AU 1054)).